The chain runs to 592 residues: Cytosolic purine 5'-nucleotidase (592 aa).

The segment covering 1–15 (MAENNNNNNNNNNNN) has biased composition (low complexity). The tract at residues 1–37 (MAENNNNNNNNNNNNVSTPPHQKPHLTTGLRTSSSGL) is disordered. The Nucleophile role is filled by Asp122. IMP contacts are provided by Asp122 and Asp124. Asp122 and Asp124 together coordinate Mg(2+). Asp124 serves as the catalytic Proton donor. Residue Asn226 participates in ATP binding. The segment at 252–273 (LTEEVADEQQQMNSPPLSSLGS) is disordered. Residues 259–273 (EQQQMNSPPLSSLGS) show a composition bias toward polar residues. Residues Arg299, Asp303, Lys312, Thr347, Asn348, Ser349, and Lys385 each coordinate IMP. Asp444 serves as a coordination point for Mg(2+). Residues Gln547 and Arg550 each coordinate ATP.

The protein belongs to the 5'(3')-deoxyribonucleotidase family. Homotetramer. Mg(2+) is required as a cofactor.

It localises to the cytoplasm. The protein resides in the cytosol. The enzyme catalyses a ribonucleoside 5'-phosphate + H2O = a ribonucleoside + phosphate. It catalyses the reaction a 2'-deoxyribonucleoside + a ribonucleoside 5'-phosphate = a ribonucleoside + a 2'-deoxyribonucleoside 5'-phosphate. In terms of biological role, broad specificity cytosolic 5'-nucleotidase that catalyzes the dephosphorylation of 6-hydroxypurine nucleoside 5'-monophosphates. In addition, possesses a phosphotransferase activity by which it can transfer a phosphate from a donor nucleoside monophosphate to an acceptor nucleoside. Through these activities regulates the purine nucleoside/nucleotide pools within the cell. The polypeptide is Cytosolic purine 5'-nucleotidase (nt5c2) (Dictyostelium discoideum (Social amoeba)).